A 183-amino-acid polypeptide reads, in one-letter code: Ribosome rescue factor SmrB (183 aa).

Residues 98–173 enclose the Smr domain; sequence LDLHGLTQLQ…GDAALLVLIE (76 aa).

The protein belongs to the SmrB family. Associates with collided ribosomes, but not with correctly translating polysomes.

Functionally, acts as a ribosome collision sensor. Detects stalled/collided disomes (pairs of ribosomes where the leading ribosome is stalled and a second ribosome has collided with it) and endonucleolytically cleaves mRNA at the 5' boundary of the stalled ribosome. Stalled/collided disomes form a new interface (primarily via the 30S subunits) that binds SmrB. Cleaved mRNA becomes available for tmRNA ligation, leading to ribosomal subunit dissociation and rescue of stalled ribosomes. This is Ribosome rescue factor SmrB from Salmonella agona (strain SL483).